Consider the following 206-residue polypeptide: Histidine biosynthesis bifunctional protein HisIE (206 aa).

The phosphoribosyl-AMP cyclohydrolase stretch occupies residues 1–114 (MLKKINFIDI…FQVPSENLFF (114 aa)). The segment at 115–206 (LHDLDCMLKF…NLKMRSNKQV (92 aa)) is phosphoribosyl-ATP pyrophosphohydrolase.

In the N-terminal section; belongs to the PRA-CH family. The protein in the C-terminal section; belongs to the PRA-PH family.

The protein localises to the cytoplasm. The enzyme catalyses 1-(5-phospho-beta-D-ribosyl)-ATP + H2O = 1-(5-phospho-beta-D-ribosyl)-5'-AMP + diphosphate + H(+). It carries out the reaction 1-(5-phospho-beta-D-ribosyl)-5'-AMP + H2O = 1-(5-phospho-beta-D-ribosyl)-5-[(5-phospho-beta-D-ribosylamino)methylideneamino]imidazole-4-carboxamide. Its pathway is amino-acid biosynthesis; L-histidine biosynthesis; L-histidine from 5-phospho-alpha-D-ribose 1-diphosphate: step 2/9. It participates in amino-acid biosynthesis; L-histidine biosynthesis; L-histidine from 5-phospho-alpha-D-ribose 1-diphosphate: step 3/9. The polypeptide is Histidine biosynthesis bifunctional protein HisIE (hisI) (Buchnera aphidicola subsp. Baizongia pistaciae (strain Bp)).